The following is a 739-amino-acid chain: DNA ligase (739 aa).

An NAD(+)-binding site is contributed by 34-38; it reads DADYD. A compositionally biased stretch (basic and acidic residues) spans 49 to 59; it reads ARFPHLKRPDS. The interval 49-70 is disordered; the sequence is ARFPHLKRPDSPSEQVGARPGE. NAD(+)-binding positions include 83 to 84 and Glu-117; that span reads SL. The N6-AMP-lysine intermediate role is filled by Lys-119. Residues Arg-140, Glu-175, Lys-291, and Lys-315 each contribute to the NAD(+) site. Cys-420, Cys-423, Cys-438, and Cys-444 together coordinate Zn(2+). In terms of domain architecture, BRCT spans 660–739; that stretch reads ARDSPVAGKT…DGWLKLIEGL (80 aa).

It belongs to the NAD-dependent DNA ligase family. LigA subfamily. The cofactor is Mg(2+). Mn(2+) is required as a cofactor.

The catalysed reaction is NAD(+) + (deoxyribonucleotide)n-3'-hydroxyl + 5'-phospho-(deoxyribonucleotide)m = (deoxyribonucleotide)n+m + AMP + beta-nicotinamide D-nucleotide.. Functionally, DNA ligase that catalyzes the formation of phosphodiester linkages between 5'-phosphoryl and 3'-hydroxyl groups in double-stranded DNA using NAD as a coenzyme and as the energy source for the reaction. It is essential for DNA replication and repair of damaged DNA. This is DNA ligase from Ruegeria pomeroyi (strain ATCC 700808 / DSM 15171 / DSS-3) (Silicibacter pomeroyi).